The following is a 134-amino-acid chain: Large ribosomal subunit protein bL12 (134 aa).

Belongs to the bacterial ribosomal protein bL12 family. In terms of assembly, homodimer. Part of the ribosomal stalk of the 50S ribosomal subunit. Forms a multimeric L10(L12)X complex, where L10 forms an elongated spine to which 2 to 4 L12 dimers bind in a sequential fashion. Binds GTP-bound translation factors.

Functionally, forms part of the ribosomal stalk which helps the ribosome interact with GTP-bound translation factors. Is thus essential for accurate translation. The polypeptide is Large ribosomal subunit protein bL12 (Anaplasma phagocytophilum (strain HZ)).